We begin with the raw amino-acid sequence, 92 residues long: Small ribosomal subunit protein uS19 (92 aa).

This sequence belongs to the universal ribosomal protein uS19 family.

Functionally, protein S19 forms a complex with S13 that binds strongly to the 16S ribosomal RNA. In Geobacillus sp. (strain WCH70), this protein is Small ribosomal subunit protein uS19.